Here is a 67-residue protein sequence, read N- to C-terminus: DNA gyrase inhibitor YacG (67 aa).

The Zn(2+) site is built by cysteine 8, cysteine 11, cysteine 27, and cysteine 31.

It belongs to the DNA gyrase inhibitor YacG family. In terms of assembly, interacts with GyrB. The cofactor is Zn(2+).

Its function is as follows. Inhibits all the catalytic activities of DNA gyrase by preventing its interaction with DNA. Acts by binding directly to the C-terminal domain of GyrB, which probably disrupts DNA binding by the gyrase. This chain is DNA gyrase inhibitor YacG, found in Ralstonia pickettii (strain 12J).